A 362-amino-acid chain; its full sequence is METTVRKQKKNLETKKPSIYSLQLHEMQDWLKEQGEPKFRAGQIFDWLYKKRVKNYEDMSNLSKGLREKLSNSFDITTLHTLVKQTSSDGTIKFLFQLYDGYSIETVLMRHEYGNSICVTTQVGCRIGCTFCASTLGGLKRNLEAGEIVAQVVEVQRALDESEERVSSLVVMGIGEPFDNYDNLMGFLRIINHEKGLHIGARHMTVSTSGIIPKIYKFAEEDLQINFAISLHAPNSELRSKLMPINRAYKLPDLMEAIKYYVNRTGRRITFEYGLFGGENDQVEHAEELAALLKGVKCHVNLIPVNYVPERDYVRTPREQIFLFEKTLKDRGVNVTIRREQGHDIDAACGQLRAKERKEETR.

The active-site Proton acceptor is Glu105. A Radical SAM core domain is found at 111–344; sequence HEYGNSICVT…VTIRREQGHD (234 aa). Residues Cys118 and Cys349 are joined by a disulfide bond. 3 residues coordinate [4Fe-4S] cluster: Cys125, Cys129, and Cys132. S-adenosyl-L-methionine is bound by residues 175 to 176, Ser207, 230 to 232, and Asn306; these read GE and SLH. The S-methylcysteine intermediate role is filled by Cys349.

It belongs to the radical SAM superfamily. RlmN family. Requires [4Fe-4S] cluster as cofactor.

The protein localises to the cytoplasm. It carries out the reaction adenosine(2503) in 23S rRNA + 2 reduced [2Fe-2S]-[ferredoxin] + 2 S-adenosyl-L-methionine = 2-methyladenosine(2503) in 23S rRNA + 5'-deoxyadenosine + L-methionine + 2 oxidized [2Fe-2S]-[ferredoxin] + S-adenosyl-L-homocysteine. The enzyme catalyses adenosine(37) in tRNA + 2 reduced [2Fe-2S]-[ferredoxin] + 2 S-adenosyl-L-methionine = 2-methyladenosine(37) in tRNA + 5'-deoxyadenosine + L-methionine + 2 oxidized [2Fe-2S]-[ferredoxin] + S-adenosyl-L-homocysteine. Specifically methylates position 2 of adenine 2503 in 23S rRNA and position 2 of adenine 37 in tRNAs. The protein is Probable dual-specificity RNA methyltransferase RlmN of Bacillus anthracis (strain CDC 684 / NRRL 3495).